Reading from the N-terminus, the 714-residue chain is Mitochondrial division protein 1 (714 aa).

A coiled-coil region spans residues 240–298 (LNIQKNSTLSEIRDIEVEVENLRQKKEKLLGKIANIEQNQLLLEDNLKQIDDRLDFLEE). The disordered stretch occupies residues 323 to 354 (LKNDAIRNEGVTTESISSEASNLPPRRRQQLR). Positions 332–343 (GVTTESISSEAS) are enriched in polar residues. Ser-376 is modified (phosphoserine). WD repeat units follow at residues 396 to 436 (THDD…KIGE), 439 to 478 (GHLA…QLYQ), 500 to 539 (AHTD…QTID), 561 to 603 (TQRN…RTLK), 604 to 642 (GHTD…NKFH), 644 to 681 (YSAP…SWSC), and 685 to 714 (GNET…IWAV).

This sequence belongs to the WD repeat MDV1/CAF4 family. As to quaternary structure, interacts with CAF4, DNM1 and FIS1, components of the mitochondrial fission machinery. Interacts via its N-terminal, coiled-coil extension (NTE) with FIS1, and via its WD repeats with DNM1.

The protein localises to the mitochondrion outer membrane. Involved in mitochondrial fission. Has a partially redundant function to CAF4 in acting as an adapter protein, binding to FIS1 on the mitochondrial outer membrane and recruiting the dynamin-like GTPase DNM1 to form mitochondrial fission complexes. Formation of these complexes is required to promote constriction and fission of the mitochondrial compartment at a late step in mitochondrial division. This chain is Mitochondrial division protein 1 (MDV1), found in Saccharomyces cerevisiae (strain YJM789) (Baker's yeast).